The chain runs to 1424 residues: ABC multidrug transporter H (1424 aa).

The interval 1–49 is disordered; that stretch reads MEDQGHLPSEPRALFDRRDDTDSTNTALDETDLSRTPLQDTSHTPHAED. A compositionally biased stretch (polar residues) spans 23–42; it reads STNTALDETDLSRTPLQDTS. N-linked (GlcNAc...) asparagine glycans are attached at residues Asn-79 and Asn-275. An ABC transporter 1 domain is found at 96–351; that stretch reads LSQFNIPQHI…MEEQGFVCRE (256 aa). Helical transmembrane passes span 488 to 508, 520 to 540, 544 to 564, 569 to 589, 605 to 625, 629 to 649, and 710 to 730; these read GLFIKSGALFFSLLYNSLLAM, VLIKHKYFAFFHPAAFCIAQI, IPVLLFQISMFAVVVYFMVGL, GAFFSYWIIIFVATMVMTALF, VSGFLISALIMYCGYLEPYHA, WFIWIYWINPLAYAFDALLSI, and NFGILWAWWALFVAVTIIATS. The interval 760–782 is disordered; sequence EEAQLNEKAGHKGTGTDSEAQSN. N-linked (GlcNAc...) asparagine glycosylation is found at Asn-790 and Asn-798. Residues 794-1037 enclose the ABC transporter 2 domain; sequence FTWKNLTYTV…VKDYFARYGA (244 aa). 830–837 is a binding site for ATP; it reads GSSGAGKT. The next 4 helical transmembrane spans lie at 1131–1151, 1161–1181, 1200–1220, and 1240–1260; these read IALHIGSALFNGFSFWMIGDS, TIFNFIFVAPGVINQLQPLFI, VAFVTALIVSEFPYLCVCAVL, and AIFFIMLCYEFLYTGIGQFIA. An N-linked (GlcNAc...) asparagine glycan is attached at Asn-1265. 2 helical membrane-spanning segments follow: residues 1268-1288 and 1300-1320; these read FAALTNPLILGTLVSFCGVLV and WIYWLNPFNYLMGSMLVFSVF. An N-linked (GlcNAc...) asparagine glycan is attached at Asn-1338. Residues 1395-1415 form a helical membrane-spanning segment; that stretch reads TAIVCIFVLSSYALVYALMKL.

Belongs to the ABC transporter superfamily. ABCG family. PDR (TC 3.A.1.205) subfamily.

The protein localises to the cell membrane. Its activity is regulated as follows. The efflux inhibitor FK506 impairs the transport activity. ABC efflux transporter that is able to transport rhodamine 6G (R-6G), a known substrate for many ABC transporters, but seems not to transport azoles. The chain is ABC multidrug transporter H from Aspergillus fumigatus (strain ATCC MYA-4609 / CBS 101355 / FGSC A1100 / Af293) (Neosartorya fumigata).